Consider the following 151-residue polypeptide: MGQGLSQPAQAVEEPSPPAVEAAPSSSPSPAPAPSSLEALAAEAMSFDEDGNESIDVKVQKALDCPCVAELKNGPCGSQFVDAFSCFLKSTEEEKGSDCVKPFIALQDCIKINPEAFSKEILEEEENDEEAEKSNLKVRAPAWSRESKPKL.

The disordered stretch occupies residues Met-1–Ser-35. Residues Gln-7 to Ser-26 are compositionally biased toward low complexity. Cystine bridges form between Cys-65-Cys-67, Cys-76-Cys-109, and Cys-86-Cys-99. The CHCH domain maps to Asn-73–Phe-117. 2 short sequence motifs (cx9C motif) span residues Cys-76–Cys-86 and Cys-99–Cys-109. Residues Glu-123–Leu-151 form a disordered region.

Its subcellular location is the mitochondrion intermembrane space. The protein resides in the peroxisome matrix. In terms of biological role, required for the import and folding of small cysteine-containing proteins in the mitochondrial intermembrane space. This is Mitochondrial intermembrane space import and assembly protein 40 homolog from Oryza sativa subsp. japonica (Rice).